A 995-amino-acid chain; its full sequence is UPF0182 protein MUL_2505 (995 aa).

Helical transmembrane passes span 18–38 (VLIL…RLID), 63–83 (FLVF…GLAL), 113–133 (LFGI…AQSY), 175–195 (FVAI…FGGI), 210–230 (IQLV…YWLN), 259–279 (KLIL…AIVL), and 287–307 (IGLV…PMIV). The disordered stretch occupies residues 900 to 947 (AATGIQPTEGGAPANVPPNNAPSPEALPGTPPSPPTAVPPAPEASVTL). Over residues 928–941 (GTPPSPPTAVPPAP) the composition is skewed to pro residues.

It belongs to the UPF0182 family.

Its subcellular location is the cell membrane. This Mycobacterium ulcerans (strain Agy99) protein is UPF0182 protein MUL_2505.